The primary structure comprises 213 residues: MDPALAAQMSEAVAEKMLQYRRDTAGWKICREGNGVSVSWRPSMEFPGNLYRGEGIVYGTLEEVWDCVKPAVGGLRVKWDENVTGFEIIQSITDTLCVSRTSTPSAAMKLISPRDFVDLVLVKRYEDGTISSNATHVEHPLCPPKPGFVRGFNHPCGCFCEPLPGEPTKTNLVTFFHTDLSGYLPQNVVDSFFPRSMTRFYANLQKAVKQFHE.

The START domain maps to 1–213 (MDPALAAQMS…LQKAVKQFHE (213 aa)).

Its function is as follows. May be involved in the intracellular transport of sterols or other lipids. May bind cholesterol or other sterols. The sequence is that of StAR-related lipid transfer protein 5 (STARD5) from Pongo abelii (Sumatran orangutan).